The primary structure comprises 427 residues: MDYSKSKQAFKEAVNLMPGGVNSPVRAFKSVDMDPIFMERGKGSKIYDIDGNEYIDYVLSWGPLILGHANDTVTGALNKAVLNGTSFGAPTELENKMAELVIERVPSIEMVRMVSSGTEATLAALRLARGFTGKNKILKFIGCYHGHSDSLLIKAGSGVATLGLPDSPGVPKGTAENTITVHYNDLDAVKLAFEQFGDDIAGVIVEPVAGNMGVVPPVEGFLEGLREITTEHGALLIFDEVMTGFRVGYNCAQGYFGVIPDLTCLGKVIGGGLPVGAFGGRKDIMEHIAPSGPVYQAGTLSGNPLAMTGGYYTLSQLTPESYEYFNHLGDMLEAGLTDVFAKHNVPITINRAGSMIGFFLNEEKVTNFEIASKSDLKLFAAMYKEMANNGVFLPPSQFEGMFLSTEHTEEDIQKTINAFDNSLTVIL.

Lys267 carries the post-translational modification N6-(pyridoxal phosphate)lysine.

This sequence belongs to the class-III pyridoxal-phosphate-dependent aminotransferase family. HemL subfamily. As to quaternary structure, homodimer. It depends on pyridoxal 5'-phosphate as a cofactor.

The protein resides in the cytoplasm. It catalyses the reaction (S)-4-amino-5-oxopentanoate = 5-aminolevulinate. It functions in the pathway porphyrin-containing compound metabolism; protoporphyrin-IX biosynthesis; 5-aminolevulinate from L-glutamyl-tRNA(Glu): step 2/2. This Macrococcus caseolyticus (strain JCSC5402) (Macrococcoides caseolyticum) protein is Glutamate-1-semialdehyde 2,1-aminomutase 1.